A 215-amino-acid polypeptide reads, in one-letter code: Thymidylate kinase (215 aa).

12-19 (GLEGAGKT) serves as a coordination point for ATP.

It belongs to the thymidylate kinase family.

The enzyme catalyses dTMP + ATP = dTDP + ADP. Functionally, phosphorylation of dTMP to form dTDP in both de novo and salvage pathways of dTTP synthesis. The protein is Thymidylate kinase of Halorhodospira halophila (strain DSM 244 / SL1) (Ectothiorhodospira halophila (strain DSM 244 / SL1)).